We begin with the raw amino-acid sequence, 339 residues long: ATPase GET3 (339 aa).

34-41 contacts ATP; it reads KGGVGKTT. Aspartate 63 is an active-site residue. ATP-binding residues include glutamate 244 and asparagine 271. Residues cysteine 282 and cysteine 285 each coordinate Zn(2+).

It belongs to the arsA ATPase family. In terms of assembly, homodimer.

It localises to the cytoplasm. It is found in the endoplasmic reticulum. ATPase required for the post-translational delivery of tail-anchored (TA) proteins to the endoplasmic reticulum. Recognizes and selectively binds the transmembrane domain of TA proteins in the cytosol. This complex then targets to the endoplasmic reticulum by membrane-bound receptors, where the tail-anchored protein is released for insertion. This process is regulated by ATP binding and hydrolysis. ATP binding drives the homodimer towards the closed dimer state, facilitating recognition of newly synthesized TA membrane proteins. ATP hydrolysis is required for insertion. Subsequently, the homodimer reverts towards the open dimer state, lowering its affinity for the membrane-bound receptor, and returning it to the cytosol to initiate a new round of targeting. The sequence is that of ATPase GET3 from Podospora anserina (strain S / ATCC MYA-4624 / DSM 980 / FGSC 10383) (Pleurage anserina).